We begin with the raw amino-acid sequence, 461 residues long: Ribulose bisphosphate carboxylase (461 aa).

Residue Asn-112 coordinates substrate. Lys-167 serves as the catalytic Proton acceptor. Lys-169 is a binding site for substrate. Residues Lys-192, Asp-194, and Glu-195 each contribute to the Mg(2+) site. Position 192 is an N6-carboxylysine (Lys-192). Catalysis depends on His-288, which acts as the Proton acceptor. Residues Arg-289, His-322, and Ser-369 each contribute to the substrate site.

Belongs to the RuBisCO large chain family. Type II subfamily. As to quaternary structure, homodimer. Requires Mg(2+) as cofactor.

The catalysed reaction is 2 (2R)-3-phosphoglycerate + 2 H(+) = D-ribulose 1,5-bisphosphate + CO2 + H2O. The enzyme catalyses D-ribulose 1,5-bisphosphate + O2 = 2-phosphoglycolate + (2R)-3-phosphoglycerate + 2 H(+). Its function is as follows. RuBisCO catalyzes two reactions: the carboxylation of D-ribulose 1,5-bisphosphate, the primary event in carbon dioxide fixation, as well as the oxidative fragmentation of the pentose substrate. Both reactions occur simultaneously and in competition at the same active site. This is Ribulose bisphosphate carboxylase from Rhodopseudomonas palustris (strain HaA2).